We begin with the raw amino-acid sequence, 779 residues long: ATP-dependent RNA helicase SUPV3L1, mitochondrial (779 aa).

The N-terminal 40 residues, Met-1–Ser-40, are a transit peptide targeting the mitochondrion. At Lys-99 the chain carries N6-acetyllysine. A Helicase ATP-binding domain is found at Glu-194 to Tyr-334. An ATP-binding site is contributed by Gly-207–Thr-214. A Helicase C-terminal domain is found at Val-353–Ala-521. The interaction with LAMTOR5, important for protein stability stretch occupies residues Pro-650–Asp-779. Over residues Ser-693–Ser-703 the composition is skewed to polar residues. 2 disordered regions span residues Ser-693 to Pro-732 and Glu-754 to Asp-779. A Phosphoserine modification is found at Ser-725. A compositionally biased stretch (basic and acidic residues) spans Glu-761–Asp-779.

Belongs to the helicase family. As to quaternary structure, homodimer; in free form. Component of the mitochondrial degradosome (mtEXO) complex which is a heteropentamer containing 2 copies of SUPV3L1 and 3 copies of PNPT1. As part of mitochondrial degradosome complex, interacts with GRSF1 in a RNA-dependent manner; the interaction enhances the activity of the complex. Interacts with LAMTOR5/HBXIP, WRN and BLM. Mg(2+) serves as cofactor. It depends on Mn(2+) as a cofactor.

The protein localises to the nucleus. It is found in the mitochondrion matrix. Its subcellular location is the mitochondrion nucleoid. The enzyme catalyses ATP + H2O = ADP + phosphate + H(+). Helicase activity toward DNA substrate is inhibited by micromolar concentrations of 5,6-dichloro-1-(beta-D-ribofuranosyl)benzotriazole (DRBT) and 4,5,6,7-tetrabromobenzotriazole (TBBT). Helicase activity toward RNA substrate is inhibited by elevated concentrations of TBBT. Inhibited by some ring-expanded nucleoside analogs. Its function is as follows. Major helicase player in mitochondrial RNA metabolism. Component of the mitochondrial degradosome (mtEXO) complex, that degrades 3' overhang double-stranded RNA with a 3'-to-5' directionality in an ATP-dependent manner. Involved in the degradation of non-coding mitochondrial transcripts (MT-ncRNA) and tRNA-like molecules. ATPase and ATP-dependent multisubstrate helicase, able to unwind double-stranded (ds) DNA and RNA, and RNA/DNA heteroduplexes in the 5'-to-3' direction. Plays a role in the RNA surveillance system in mitochondria; regulates the stability of mature mRNAs, the removal of aberrantly formed mRNAs and the rapid degradation of non coding processing intermediates. Also implicated in recombination and chromatin maintenance pathways. May protect cells from apoptosis. Associates with mitochondrial DNA. The polypeptide is ATP-dependent RNA helicase SUPV3L1, mitochondrial (Supv3l1) (Mus musculus (Mouse)).